A 424-amino-acid polypeptide reads, in one-letter code: Serine--tRNA ligase (424 aa).

230–232 (TAE) lines the L-serine pocket. 261–263 (RSE) provides a ligand contact to ATP. Residue glutamate 284 coordinates L-serine. Residue 348–351 (EISS) coordinates ATP. Serine 384 serves as a coordination point for L-serine.

It belongs to the class-II aminoacyl-tRNA synthetase family. Type-1 seryl-tRNA synthetase subfamily. In terms of assembly, homodimer. The tRNA molecule binds across the dimer.

The protein localises to the cytoplasm. It catalyses the reaction tRNA(Ser) + L-serine + ATP = L-seryl-tRNA(Ser) + AMP + diphosphate + H(+). It carries out the reaction tRNA(Sec) + L-serine + ATP = L-seryl-tRNA(Sec) + AMP + diphosphate + H(+). It participates in aminoacyl-tRNA biosynthesis; selenocysteinyl-tRNA(Sec) biosynthesis; L-seryl-tRNA(Sec) from L-serine and tRNA(Sec): step 1/1. Functionally, catalyzes the attachment of serine to tRNA(Ser). Is also able to aminoacylate tRNA(Sec) with serine, to form the misacylated tRNA L-seryl-tRNA(Sec), which will be further converted into selenocysteinyl-tRNA(Sec). The polypeptide is Serine--tRNA ligase (Streptococcus pneumoniae serotype 4 (strain ATCC BAA-334 / TIGR4)).